Reading from the N-terminus, the 262-residue chain is Acyl-[acyl-carrier-protein]--UDP-N-acetylglucosamine O-acyltransferase (262 aa).

Belongs to the transferase hexapeptide repeat family. LpxA subfamily. In terms of assembly, homotrimer.

Its subcellular location is the cytoplasm. The catalysed reaction is a (3R)-hydroxyacyl-[ACP] + UDP-N-acetyl-alpha-D-glucosamine = a UDP-3-O-[(3R)-3-hydroxyacyl]-N-acetyl-alpha-D-glucosamine + holo-[ACP]. The protein operates within glycolipid biosynthesis; lipid IV(A) biosynthesis; lipid IV(A) from (3R)-3-hydroxytetradecanoyl-[acyl-carrier-protein] and UDP-N-acetyl-alpha-D-glucosamine: step 1/6. Functionally, involved in the biosynthesis of lipid A, a phosphorylated glycolipid that anchors the lipopolysaccharide to the outer membrane of the cell. The protein is Acyl-[acyl-carrier-protein]--UDP-N-acetylglucosamine O-acyltransferase of Pasteurella multocida (strain Pm70).